The sequence spans 526 residues: Exodeoxyribonuclease 7 large subunit (526 aa).

The interval 497 to 526 is disordered; that stretch reads AMTTEGGTPPAGAKKRSTKPAEPPKQGSLF.

The protein belongs to the XseA family. Heterooligomer composed of large and small subunits.

It is found in the cytoplasm. The catalysed reaction is Exonucleolytic cleavage in either 5'- to 3'- or 3'- to 5'-direction to yield nucleoside 5'-phosphates.. In terms of biological role, bidirectionally degrades single-stranded DNA into large acid-insoluble oligonucleotides, which are then degraded further into small acid-soluble oligonucleotides. The polypeptide is Exodeoxyribonuclease 7 large subunit (Rhizobium johnstonii (strain DSM 114642 / LMG 32736 / 3841) (Rhizobium leguminosarum bv. viciae)).